A 177-amino-acid chain; its full sequence is Large ribosomal subunit protein uL10 (177 aa).

The protein belongs to the universal ribosomal protein uL10 family. Part of the ribosomal stalk of the 50S ribosomal subunit. The N-terminus interacts with L11 and the large rRNA to form the base of the stalk. The C-terminus forms an elongated spine to which L12 dimers bind in a sequential fashion forming a multimeric L10(L12)X complex.

Functionally, forms part of the ribosomal stalk, playing a central role in the interaction of the ribosome with GTP-bound translation factors. This Thermoanaerobacter sp. (strain X514) protein is Large ribosomal subunit protein uL10.